The following is a 121-amino-acid chain: Large ribosomal subunit protein bL12 (121 aa).

Belongs to the bacterial ribosomal protein bL12 family. As to quaternary structure, homodimer. Part of the ribosomal stalk of the 50S ribosomal subunit. Forms a multimeric L10(L12)X complex, where L10 forms an elongated spine to which 2 to 4 L12 dimers bind in a sequential fashion. Binds GTP-bound translation factors.

In terms of biological role, forms part of the ribosomal stalk which helps the ribosome interact with GTP-bound translation factors. Is thus essential for accurate translation. This is Large ribosomal subunit protein bL12 from Streptococcus equi subsp. equi (strain 4047).